The sequence spans 471 residues: MEFDCEGLRRLLGKYKFRDLTVEELRNVNVFFPHFKYSMDTYVFKDSSQKDLLNFTGTIPVMYQGNTYNIPIRFWILDSHPFAPPICFLKPTANMGILVGKHVDAQGRIYLPYLQNWSHPKSVIVGLIKEMIAKFQEELPMYSLSSSDEARQVDLLAYIAKITEGVSDTNSKSWANHENKTVNKITVVGGGELGIACTLAISAKGIADRLVLLDLSEGTKGATMDLEIFNLPNVEISKDLSASAHSKVVIFTVNSLGSSQSYLDVVQSNVDMFRALVPALGHYSQHSVLLVASQPVEIMTYVTWKLSTFPANRVIGIGCNLDSQRLQYIITNVLKAQTSGKEVWVIGEQGEDKVLTWSGQEEVVSHTSQVQLSNRAMELLRVKGQRSWSVGLSVADMVDSIVNNKKKVHSVSALAKGYYDINSEVFLSLPCILGTNGVSEVIKTTLKEDTVTEKLQSSASSIHSLQQQLKL.

The region spanning 2-145 (EFDCEGLRRL…QEELPMYSLS (144 aa)) is the UEV domain. 191–219 (GELGIACTLAISAKGIADRLVLLDLSEGT) is a binding site for NAD(+).

It in the N-terminal section; belongs to the ubiquitin-conjugating enzyme family. UEV subfamily. The protein in the C-terminal section; belongs to the LDH/MDH superfamily. As to quaternary structure, homodimer. Colon, colon carcinoma cell lines, normal cervical epithelium, carcinomas of the uterine cervix and peripheral blood leukocytes.

Its function is as follows. Possible negative regulator of polyubiquitination. The chain is Ubiquitin-conjugating enzyme E2 variant 3 from Homo sapiens (Human).